Reading from the N-terminus, the 727-residue chain is Beta-galactosidase 2 (727 aa).

Positions 1–27 (MSMHFRNKAWIILAILCFSSLIHSTEA) are cleaved as a signal peptide. Catalysis depends on Glu185, which acts as the Proton donor. Glu254 functions as the Nucleophile in the catalytic mechanism. Residue Asn255 is glycosylated (N-linked (GlcNAc...) asparagine).

The protein belongs to the glycosyl hydrolase 35 family. In terms of tissue distribution, ubiquitous, with higher expression levels in roots and siliques.

It localises to the secreted. The protein localises to the extracellular space. It is found in the apoplast. The enzyme catalyses Hydrolysis of terminal non-reducing beta-D-galactose residues in beta-D-galactosides.. In Arabidopsis thaliana (Mouse-ear cress), this protein is Beta-galactosidase 2 (BGAL2).